The following is a 151-amino-acid chain: Putative pre-16S rRNA nuclease (151 aa).

This sequence belongs to the YqgF nuclease family.

The protein localises to the cytoplasm. Functionally, could be a nuclease involved in processing of the 5'-end of pre-16S rRNA. In Pelagibacter ubique (strain HTCC1062), this protein is Putative pre-16S rRNA nuclease.